The following is a 374-amino-acid chain: Translocating chain-associated membrane protein 1 (374 aa).

Residues 2 to 29 lie on the Cytoplasmic side of the membrane; it reads AIRKKSTKSPPVLSHEFILQNHADIVSC. The helical transmembrane segment at 30 to 50 threads the bilayer; the sequence is VAMVFLLGLMFEITAKASIIF. The Lumenal portion of the chain corresponds to 51 to 76; it reads VTLQYNVTLPATEEQATESTSLYYYG. An N-linked (GlcNAc...) asparagine glycan is attached at asparagine 56. The helical transmembrane segment at 77–97 threads the bilayer; it reads IKDLATVFFYMLVAIIIHAII. Residues 98–121 are Cytoplasmic-facing; the sequence is QEYVLDKINRRMHFSKTKHSKFNE. Residues 117–326 form the TLC domain; sequence SKFNESGQLS…NFQLRRWREH (210 aa). The chain crosses the membrane as a helical span at residues 122-142; sequence SGQLSAFYLFSCIWGTFILIS. Residues 143 to 159 are Lumenal-facing; it reads ENYISDPTILWRAYPHN. The helical transmembrane segment at 160–180 threads the bilayer; it reads LMTFQMKFFYIAQLAYWFHAF. Over 181–192 the chain is Cytoplasmic; the sequence is PELYFQKTKKED. Residues 193–213 traverse the membrane as a helical segment; that stretch reads IPRQLVYIGLYLFHIAGAYLL. Residues 214 to 217 lie on the Lumenal side of the membrane; the sequence is NLNH. The chain crosses the membrane as a helical span at residues 218–238; sequence LGLVLLVLHYFVEFLFHISRL. Residues 239-251 are Cytoplasmic-facing; sequence FYFSDEKYQKGFS. Residues 252–272 traverse the membrane as a helical segment; it reads LWAVLFVLGRLLTLILSVLTV. Residues 273–297 are Lumenal-facing; that stretch reads GFGLARAENQKLDFSAGNFNVLAVR. The chain crosses the membrane as a helical span at residues 298 to 318; that stretch reads IAVLASICITQAFMMWKFINF. The Cytoplasmic segment spans residues 319-374; the sequence is QLRRWREHSTFQAPVVKKKPTVTKGRSSRKGTENGVNGTVTSNGADSPRNRKEKSS. The span at 334-347 shows a compositional bias: basic residues; sequence VKKKPTVTKGRSSR. A disordered region spans residues 334 to 374; the sequence is VKKKPTVTKGRSSRKGTENGVNGTVTSNGADSPRNRKEKSS. Polar residues predominate over residues 352-363; it reads NGVNGTVTSNGA. Phosphoserine is present on serine 365.

It belongs to the TRAM family. As to quaternary structure, interacts with SEC61B. May interact with Derlin-1/DERL1. In terms of processing, N-glycosylated.

Its subcellular location is the endoplasmic reticulum membrane. Involved in the translocation of nascent protein chains into or through the endoplasmic reticulum (ER) membrane by facilitating the proper chain positioning at the SEC61 channel. Regulates the exposure of nascent secretory protein chain to the cytosol during translocation into the ER. May affect the phospholipid bilayer in the vicinity of the lateral gate of the SEC61 channel, thereby facilitating ER protein transport. Intimately associates with transmembrane (TM) domain of nascent membrane proteins during the entire integration process into the ER membrane. Associates with the second TM domain of G-protein-coupled receptor opsin/OPSD nascent chain in the ER membrane, which may facilitate its integration into the membrane. Under conditions of ER stress, participates in the disposal of misfolded ER membrane proteins during the unfolded protein response (UPR), an integrated stress response (ISR) pathway, by selectively retrotranslocating misfolded ER-membrane proteins from the ER into the cytosol where they are ubiquitinated and degraded by the proteasome. The polypeptide is Translocating chain-associated membrane protein 1 (TRAM1) (Canis lupus familiaris (Dog)).